A 64-amino-acid polypeptide reads, in one-letter code: Relaxin (64 aa).

Cystine bridges form between cysteine 11–cysteine 51, cysteine 23–cysteine 64, and cysteine 50–cysteine 55.

This sequence belongs to the insulin family. Heterodimer of a B chain and an A chain linked by two disulfide bonds.

Its subcellular location is the secreted. In Leucoraja erinaceus (Little skate), this protein is Relaxin.